The sequence spans 387 residues: BarH-like 2 homeobox protein (387 aa).

3 disordered regions span residues 1–145 (MTME…FLIK), 157–240 (CAPY…TAFS), and 367–387 (PGGQ…PHPR). Positions 7–24 (SGSSFGIDTILSSASSGS) are enriched in polar residues. The segment covering 100-113 (APTQSLQPLPQQQQ) has biased composition (low complexity). Residues 114–126 (PLPPQQPPPPPPQ) show a composition bias toward pro residues. Positions 127 to 141 (QLGSAASAPRTSTSS) are enriched in low complexity. The span at 160-178 (YSTSVSSPHHTPKQESNAV) shows a compositional bias: polar residues. The segment covering 180–220 (ESFRPKLEQEDSKTKLDKREDSQSDIKCHGTKEEGDREITS) has biased composition (basic and acidic residues). Residues 232–291 (PRKARTAFSDHQLNQLERSFERQKYLSVQDRMDLAAALNLTDTQVKTWYQNRRTKWKRQT) constitute a DNA-binding region (homeobox).

It belongs to the BAR homeobox family.

Its subcellular location is the nucleus. Its function is as follows. Potential regulator of neural basic helix-loop-helix genes. In Homo sapiens (Human), this protein is BarH-like 2 homeobox protein (BARHL2).